A 247-amino-acid chain; its full sequence is ATP synthase subunit a, chloroplastic (247 aa).

The next 5 helical transmembrane spans lie at 38 to 58, 95 to 115, 134 to 154, 199 to 219, and 220 to 240; these read QVLI…IIAV, VPFI…GALL, INTT…AGLT, LVVV…VMFL, and GLFT…AYIG.

Belongs to the ATPase A chain family. As to quaternary structure, F-type ATPases have 2 components, CF(1) - the catalytic core - and CF(0) - the membrane proton channel. CF(1) has five subunits: alpha(3), beta(3), gamma(1), delta(1), epsilon(1). CF(0) has four main subunits: a, b, b' and c.

The protein resides in the plastid. The protein localises to the chloroplast thylakoid membrane. In terms of biological role, key component of the proton channel; it plays a direct role in the translocation of protons across the membrane. This is ATP synthase subunit a, chloroplastic from Morus indica (Mulberry).